Here is a 556-residue protein sequence, read N- to C-terminus: WD repeat-containing protein srw1 (556 aa).

The tract at residues 1–80 (MDEFDGFTRP…NEGDRFIPSR (80 aa)) is disordered. The span at 12 to 37 (SSNSSANRNSNNSMNRVENNNSNSDS) shows a compositional bias: low complexity. Residues 43–55 (SRGDAHTRMRQGF) are compositionally biased toward basic and acidic residues. Ser62 bears the Phosphoserine mark. Positions 69-78 (RTNEGDRFIP) are enriched in basic and acidic residues. At Thr98 the chain carries Phosphothreonine. Residues 126 to 146 (TFNNSPIATPNTTIGVSTPRT) show a composition bias toward polar residues. Residues 126 to 173 (TFNNSPIATPNTTIGVSTPRTDSGIDDIELTQRTPPSSSHTSSSILQN) are disordered. Positions 159–169 (TPPSSSHTSSS) are enriched in low complexity. At Thr177 the chain carries Phosphothreonine. Ser187 and Ser214 each carry phosphoserine. 7 WD repeats span residues 246–285 (GLAGDFYLNLLDWGQCNMLAVALASRVYLWSGISSEVTVM), 289–328 (YPTDTVTSLRWVQRGTHLAVGTHNGSVEIWDAATCKKTRT), 331–368 (GHTERVGALSWNDHVLSSGGRDNHILHRDVRAPEHYFR), 372–411 (AHRQEVCGLEWNSNENLLASGGNDNALMVWDKFEEKPLYS), 414–456 (NHIA…MLHN), 458–499 (DTGS…RVGT), and 502–541 (GHTDRVLYLAMSPNGENIVTGAADETLRFWKLFDSKSKHS).

It belongs to the WD repeat CDC20/Fizzy family. In terms of processing, phosphorylated by cdc2-cdc13-CDK complex. This targets srw1 for proteolysis which in turn promotes cdc13 turnover. Dephosphorylated during G1 arrest.

It localises to the nucleus. Functionally, has a role in cell differentiation and cell cycling by negatively regulating cig2 and cdc12-associated cdc2. Down-regulates the level of cdc13, particularly in a nitrogen deprived environment. Regulator of cell cycle G1 phase progression. Prevents onset of mitosis during the pre-Start G1 period. Required for degradation of cdc13 mitotic cyclin B during G1 arrest but not during mitotic exit. This chain is WD repeat-containing protein srw1 (srw1), found in Schizosaccharomyces pombe (strain 972 / ATCC 24843) (Fission yeast).